Reading from the N-terminus, the 218-residue chain is Mitochondrial fission factor (218 aa).

Residues 1-198 (MAEISRIQYE…ENKERAKREM (198 aa)) are Cytoplasmic-facing. Residue Thr-89 is modified to Phosphothreonine. Phosphoserine is present on residues Ser-129, Ser-131, Ser-146, and Ser-171. The stretch at 167 to 198 (VDAASLRRQIIKLNRRLQLLEEENKERAKREM) forms a coiled coil. A helical; Anchor for type IV membrane protein membrane pass occupies residues 199-216 (VMYSITVAFWLLNSWLWF). The Mitochondrial intermembrane portion of the chain corresponds to 217 to 218 (RR).

This sequence belongs to the Tango11 family. As to quaternary structure, homodimer. Interacts with DNM1L. Interacts with C11orf65/MFI; the interaction inhibits MFF interaction with DNM1L.

The protein resides in the mitochondrion outer membrane. It localises to the peroxisome. The protein localises to the cytoplasmic vesicle. It is found in the secretory vesicle. Its subcellular location is the synaptic vesicle. Functionally, plays a role in mitochondrial and peroxisomal fission. Promotes the recruitment and association of the fission mediator dynamin-related protein 1 (DNM1L) to the mitochondrial surface. May be involved in regulation of synaptic vesicle membrane dynamics by recruitment of DNM1L to clathrin-containing vesicles. The chain is Mitochondrial fission factor (MFF) from Pongo abelii (Sumatran orangutan).